A 359-amino-acid chain; its full sequence is Probable tyrosine-protein phosphatase pir-2 (359 aa).

The region spanning 16–191 is the Tyrosine-protein phosphatase domain; sequence QPVGNVIPRT…AKDKRDKQVD (176 aa). Cys-131 functions as the Phosphocysteine intermediate in the catalytic mechanism. A compositionally biased stretch (basic and acidic residues) spans 184–199; sequence DKRDKQVDSDSDSSER. Disordered stretches follow at residues 184–211, 234–259, and 274–328; these read DKRD…KHRE, SVSG…PHHW, and PVAN…RNRM. Positions 200-210 are enriched in basic residues; it reads QRKKKNKRKHR. The segment covering 234 to 246 has biased composition (polar residues); that stretch reads SVSGTDYQNSPNG. Residues 290-309 are compositionally biased toward acidic residues; the sequence is PQEEEEFEEDFEEIEEETET. Residues 319–328 show a composition bias toward basic residues; sequence SKRRARRNRM.

The protein belongs to the protein-tyrosine phosphatase family. Non-receptor class CDC14 subfamily.

It catalyses the reaction O-phospho-L-tyrosyl-[protein] + H2O = L-tyrosyl-[protein] + phosphate. This Caenorhabditis elegans protein is Probable tyrosine-protein phosphatase pir-2.